Consider the following 218-residue polypeptide: MVAQNSRRELLAASLILTLALIRLTEANSEGDALHALRRSLSDPDNVVQSWDPTLVNPCTWFHVTCNQHHQVTRLDLGNSNLSGHLVPELGKLEHLQYLELYKNEIQGTIPSELGNLKSLISLDLYNNNLTGKIPSSLGKLKSLVFLRLNENRLTGPIPRELTVISSLKVVDVSGNDLCGTIPVEGPFEHIPMQNFENNLRLEGPELLGLASYDTNCT.

Residues 1–27 (MVAQNSRRELLAASLILTLALIRLTEA) form the signal peptide. LRR repeat units follow at residues 69–93 (HHQVTRLDLGNSNLSGHLVPELGKL), 94–117 (EHLQYLELYKNEIQGTIPSELGNL), 119–141 (SLISLDLYNNNLTGKIPSSLGKL), 142–165 (KSLVFLRLNENRLTGPIPRELTVI), and 167–190 (SLKVVDVSGNDLCGTIPVEGPFEH).

In terms of biological role, probably involved in plant defense response. The polypeptide is Leucine-rich repeat protein 2 (Arabidopsis thaliana (Mouse-ear cress)).